The chain runs to 82 residues: ATP synthase subunit c, chloroplastic (82 aa).

A run of 2 helical transmembrane segments spans residues 3-23 (PLIC…GAIG) and 57-77 (LAFM…LMFA).

This sequence belongs to the ATPase C chain family. As to quaternary structure, F-type ATPases have 2 components, F(1) - the catalytic core - and F(0) - the membrane proton channel. F(1) has five subunits: alpha(3), beta(3), gamma(1), delta(1), epsilon(1). F(0) has four main subunits: a(1), b(1), b'(1) and c(10-14). The alpha and beta chains form an alternating ring which encloses part of the gamma chain. F(1) is attached to F(0) by a central stalk formed by the gamma and epsilon chains, while a peripheral stalk is formed by the delta, b and b' chains.

The protein localises to the plastid. It localises to the chloroplast thylakoid membrane. Its function is as follows. F(1)F(0) ATP synthase produces ATP from ADP in the presence of a proton or sodium gradient. F-type ATPases consist of two structural domains, F(1) containing the extramembraneous catalytic core and F(0) containing the membrane proton channel, linked together by a central stalk and a peripheral stalk. During catalysis, ATP synthesis in the catalytic domain of F(1) is coupled via a rotary mechanism of the central stalk subunits to proton translocation. Key component of the F(0) channel; it plays a direct role in translocation across the membrane. A homomeric c-ring of between 10-14 subunits forms the central stalk rotor element with the F(1) delta and epsilon subunits. The polypeptide is ATP synthase subunit c, chloroplastic (Ostreococcus tauri).